The primary structure comprises 376 residues: Alcohol dehydrogenase class-3 (376 aa).

At Ser1 the chain carries N-acetylserine. Cys47, His69, Cys99, Cys102, Cys105, Cys113, and Cys176 together coordinate Zn(2+).

Belongs to the zinc-containing alcohol dehydrogenase family. Class-III subfamily. Homodimer. Requires Zn(2+) as cofactor. Liver and gut.

Its subcellular location is the cytoplasm. The catalysed reaction is a primary alcohol + NAD(+) = an aldehyde + NADH + H(+). It catalyses the reaction a secondary alcohol + NAD(+) = a ketone + NADH + H(+). The enzyme catalyses S-(hydroxymethyl)glutathione + NADP(+) = S-formylglutathione + NADPH + H(+). It carries out the reaction S-(hydroxymethyl)glutathione + NAD(+) = S-formylglutathione + NADH + H(+). The catalysed reaction is S-nitrosoglutathione + NADH + H(+) = S-(hydroxysulfenamide)glutathione + NAD(+). In terms of biological role, class-III ADH is remarkably ineffective in oxidizing ethanol, but it readily catalyzes the oxidation of long-chain primary alcohols and the oxidation of S-(hydroxymethyl) glutathione. Also acts as a S-nitroso-glutathione reductase by catalyzing the NADH-dependent reduction of S-nitrosoglutathione, thereby regulating protein S-nitrosylation. The protein is Alcohol dehydrogenase class-3 of Myxine glutinosa (Atlantic hagfish).